The primary structure comprises 372 residues: D-alanine--D-alanine ligase (372 aa).

In terms of domain architecture, ATP-grasp spans 145-349 (KTVLRAGGIP…CPNLLDQLIE (205 aa)). 176 to 231 (DRWGTSELFVKAVSLGSSVATLPVKTETEFTKAVKEVFRYDDRLMVEPRIRGREIE) provides a ligand contact to ATP. Mg(2+)-binding residues include aspartate 303, glutamate 316, and asparagine 318.

Belongs to the D-alanine--D-alanine ligase family. The cofactor is Mg(2+). Mn(2+) is required as a cofactor.

It is found in the cytoplasm. The enzyme catalyses 2 D-alanine + ATP = D-alanyl-D-alanine + ADP + phosphate + H(+). It participates in cell wall biogenesis; peptidoglycan biosynthesis. Its function is as follows. Cell wall formation. This chain is D-alanine--D-alanine ligase, found in Coxiella burnetii (strain RSA 331 / Henzerling II).